A 128-amino-acid polypeptide reads, in one-letter code: Small nuclear ribonucleoprotein SmD3a (128 aa).

Residues 7–79 (IPVKLLHESS…VRFLVIPDML (73 aa)) form the Sm domain. The tract at residues 90-128 (GKGKSASLGVGRGRGAAMRAKGTGRGTGGGRGAVPPVRR) is disordered. Residues 112–121 (TGRGTGGGRG) are compositionally biased toward gly residues.

This sequence belongs to the snRNP core protein family. Expressed in young seedlings, roots, leaves, flowers and immature siliques.

It localises to the cytoplasm. Its subcellular location is the cytosol. The protein resides in the nucleus. Functionally, core component of the spliceosomal U1, U2, U4 and U5 small nuclear ribonucleoproteins (snRNPs), the building blocks of the spliceosome. May play a minor role in the splicing of cellular pre-mRNAs. This is Small nuclear ribonucleoprotein SmD3a from Arabidopsis thaliana (Mouse-ear cress).